Reading from the N-terminus, the 940-residue chain is Mitogen-activated protein kinase kinase kinase 10 (940 aa).

The region spanning 16–81 (PAGPVWTAVF…PSNYVAPAAP (66 aa)) is the SH3 domain. Residues 98 to 360 (LQLEEIIGVG…GSILKQLEVI (263 aa)) form the Protein kinase domain. ATP is bound by residues 104 to 112 (IGVGGFGKV) and K125. The Proton acceptor role is filled by D222. A Phosphothreonine; by autocatalysis modification is found at T258. Phosphoserine; by autocatalysis and MAP4K1 is present on S262. 2 leucine-zipper regions span residues 384–405 (IQHM…EEEL) and 419–440 (LRRR…ELHL). 3 disordered regions span residues 490–599 (PTLD…MAPG), 687–734 (RAGD…GLAP), and 749–917 (STRS…QPTL). Phosphoserine is present on residues S498, S502, and S506. Positions 501-511 (ASPPASPSIIP) are enriched in low complexity. T552 carries the post-translational modification Phosphothreonine. Composition is skewed to basic and acidic residues over residues 560-572 (QKER…RLKA) and 687-698 (RAGDGEEQRRWL). Positions 765–775 (APSPPPSPLAP) are enriched in pro residues. A compositionally biased stretch (basic and acidic residues) spans 822-840 (LRQREPLELTNHGPRDPLD). R843 bears the Omega-N-methylarginine mark. The segment covering 899-913 (PSRPDTPESPGPPSV) has biased composition (pro residues).

It belongs to the protein kinase superfamily. STE Ser/Thr protein kinase family. MAP kinase kinase kinase subfamily. In terms of assembly, homodimer. Interacts with SH3RF2. Mg(2+) serves as cofactor. Autophosphorylation on serine and threonine residues within the activation loop plays a role in enzyme activation.

It catalyses the reaction L-seryl-[protein] + ATP = O-phospho-L-seryl-[protein] + ADP + H(+). The catalysed reaction is L-threonyl-[protein] + ATP = O-phospho-L-threonyl-[protein] + ADP + H(+). With respect to regulation, homodimerization via the leucine zipper domains is required for autophosphorylation and subsequent activation. Its function is as follows. Activates the JUN N-terminal pathway. The protein is Mitogen-activated protein kinase kinase kinase 10 (Map3k10) of Mus musculus (Mouse).